Here is a 525-residue protein sequence, read N- to C-terminus: GMP synthase [glutamine-hydrolyzing] (525 aa).

The region spanning 16 to 205 (PVLVVDFGAQ…LHDFAGLGAQ (190 aa)) is the Glutamine amidotransferase type-1 domain. The Nucleophile role is filled by cysteine 93. Active-site residues include histidine 179 and glutamate 181. A GMPS ATP-PPase domain is found at 206 to 399 (WTPANIANAL…LGLPEEIVAR (194 aa)). 233–239 (SGGVDSA) is a binding site for ATP.

In terms of assembly, homodimer.

The catalysed reaction is XMP + L-glutamine + ATP + H2O = GMP + L-glutamate + AMP + diphosphate + 2 H(+). It functions in the pathway purine metabolism; GMP biosynthesis; GMP from XMP (L-Gln route): step 1/1. Its function is as follows. Catalyzes the synthesis of GMP from XMP. The sequence is that of GMP synthase [glutamine-hydrolyzing] from Mycobacterium bovis (strain BCG / Pasteur 1173P2).